The sequence spans 361 residues: Phosphoserine aminotransferase (361 aa).

An L-glutamate-binding site is contributed by arginine 42. Pyridoxal 5'-phosphate contacts are provided by residues 76–77, tryptophan 102, threonine 153, aspartate 173, and glutamine 196; that span reads AR. Lysine 197 is subject to N6-(pyridoxal phosphate)lysine. 238 to 239 is a pyridoxal 5'-phosphate binding site; sequence NT.

Belongs to the class-V pyridoxal-phosphate-dependent aminotransferase family. SerC subfamily. As to quaternary structure, homodimer. It depends on pyridoxal 5'-phosphate as a cofactor.

Its subcellular location is the cytoplasm. The enzyme catalyses O-phospho-L-serine + 2-oxoglutarate = 3-phosphooxypyruvate + L-glutamate. It catalyses the reaction 4-(phosphooxy)-L-threonine + 2-oxoglutarate = (R)-3-hydroxy-2-oxo-4-phosphooxybutanoate + L-glutamate. Its pathway is amino-acid biosynthesis; L-serine biosynthesis; L-serine from 3-phospho-D-glycerate: step 2/3. The protein operates within cofactor biosynthesis; pyridoxine 5'-phosphate biosynthesis; pyridoxine 5'-phosphate from D-erythrose 4-phosphate: step 3/5. Catalyzes the reversible conversion of 3-phosphohydroxypyruvate to phosphoserine and of 3-hydroxy-2-oxo-4-phosphonooxybutanoate to phosphohydroxythreonine. This Buchnera aphidicola subsp. Acyrthosiphon pisum (strain 5A) protein is Phosphoserine aminotransferase.